The primary structure comprises 598 residues: Aspartate--tRNA(Asp/Asn) ligase (598 aa).

E177 serves as a coordination point for L-aspartate. Positions 201–204 (QIFK) are aspartate. Positions 223 and 451 each coordinate L-aspartate. 223 to 225 (RDE) contacts ATP. E485 contacts ATP. Residue R492 coordinates L-aspartate. Residue 537-540 (GVDR) coordinates ATP.

This sequence belongs to the class-II aminoacyl-tRNA synthetase family. Type 1 subfamily. As to quaternary structure, homodimer.

It is found in the cytoplasm. It catalyses the reaction tRNA(Asx) + L-aspartate + ATP = L-aspartyl-tRNA(Asx) + AMP + diphosphate. Aspartyl-tRNA synthetase with relaxed tRNA specificity since it is able to aspartylate not only its cognate tRNA(Asp) but also tRNA(Asn). Reaction proceeds in two steps: L-aspartate is first activated by ATP to form Asp-AMP and then transferred to the acceptor end of tRNA(Asp/Asn). This Anaplasma phagocytophilum (strain HZ) protein is Aspartate--tRNA(Asp/Asn) ligase.